Consider the following 230-residue polypeptide: MTDMNILDLFLKASLLVKLIMLILIGFSIASWAIIIQRTRILNAAAREAEAFEDKFWSGIELSRLYQESQGKRDNLTGSEQIFYSGFKEFVRLHRANSHAPEAVVEGASRAMRISMNRELENLETHIPFLGTVGSISPYIGLFGTVWGIMHAFIALGAVKQATLQMVAPGIAEALIATAIGLFAAIPAVMAYNRLNQRVNKLELNYDNFMEEFTAILHRQAFTVSESNKG.

Transmembrane regions (helical) follow at residues 16 to 36 (LVKL…AIII), 139 to 159 (YIGL…LGAV), and 171 to 191 (IAEA…AVMA).

This sequence belongs to the ExbB/TolQ family. As to quaternary structure, the Tol-Pal system is composed of five core proteins: the inner membrane proteins TolA, TolQ and TolR, the periplasmic protein TolB and the outer membrane protein Pal. They form a network linking the inner and outer membranes and the peptidoglycan layer.

The protein resides in the cell inner membrane. Its function is as follows. Part of the Tol-Pal system, which plays a role in outer membrane invagination during cell division and is important for maintaining outer membrane integrity. Required, with TolR, for the proton motive force-dependent activation of TolA and for TolA-Pal interaction. The polypeptide is Tol-Pal system protein TolQ (Escherichia coli O157:H7).